The chain runs to 189 residues: uncharacterized protein (189 aa).

The next 4 helical transmembrane spans lie at 35 to 55 (IIWY…AVMK), 97 to 117 (GVLQ…ALHF), 123 to 143 (WLLF…YEWT), and 144 to 164 (GNLF…ACQI).

The protein resides in the cell membrane. This is an uncharacterized protein from Bacillus subtilis (strain 168).